The following is a 413-amino-acid chain: Glutamyl-tRNA reductase (413 aa).

Substrate is bound by residues 57–60 (TCNR), Ser-113, 118–120 (DFE), and Gln-124. The active-site Nucleophile is the Cys-58. 193–198 (GTGKIG) serves as a coordination point for NADP(+).

Belongs to the glutamyl-tRNA reductase family. As to quaternary structure, homodimer.

It catalyses the reaction (S)-4-amino-5-oxopentanoate + tRNA(Glu) + NADP(+) = L-glutamyl-tRNA(Glu) + NADPH + H(+). It functions in the pathway porphyrin-containing compound metabolism; protoporphyrin-IX biosynthesis; 5-aminolevulinate from L-glutamyl-tRNA(Glu): step 1/2. Its function is as follows. Catalyzes the NADPH-dependent reduction of glutamyl-tRNA(Glu) to glutamate 1-semialdehyde (GSA). This Flavobacterium psychrophilum (strain ATCC 49511 / DSM 21280 / CIP 103535 / JIP02/86) protein is Glutamyl-tRNA reductase.